Consider the following 706-residue polypeptide: Complement C1r-B subcomponent (706 aa).

Positions 1–16 (MWLFALLVTLFYGVEG) are cleaved as a signal peptide. The CUB 1 domain occupies 17–140 (SIYLPQKLYG…KGFLAYYQAV (124 aa)). Residues glutamate 65, aspartate 73, and aspartate 118 each contribute to the Ca(2+) site. Cysteine 70 and cysteine 88 are joined by a disulfide. An N-linked (GlcNAc...) asparagine glycan is attached at asparagine 124. Positions 141, 142, and 144 each coordinate Ca(2+). Residues 141 to 189 (DLDECASQPNSVEEGLQPRCQHLCHNYVGGYFCSCHPGYELQKDGQSCQ) form the EGF-like; calcium-binding domain. 4 disulfides stabilise this stretch: cysteine 145–cysteine 164, cysteine 160–cysteine 173, cysteine 175–cysteine 188, and cysteine 192–cysteine 219. Asparagine 166, tyrosine 167, and glycine 170 together coordinate Ca(2+). Asparagine 166 carries the post-translational modification (3R)-3-hydroxyasparagine. The 113-residue stretch at 192-304 (CSSELYTEPS…RGWKLHYTTE (113 aa)) folds into the CUB 2 domain. A Phosphoserine; by CK2 modification is found at serine 205. The N-linked (GlcNAc...) asparagine glycan is linked to asparagine 220. Positions 242, 252, 289, and 293 each coordinate Ca(2+). A disulfide bond links cysteine 249 and cysteine 267. Sushi domains lie at 306 to 372 (IKCP…RCKI) and 373 to 448 (KNCG…RCLP). 5 disulfides stabilise this stretch: cysteine 308/cysteine 357, cysteine 337/cysteine 370, cysteine 375/cysteine 428, cysteine 405/cysteine 446, and cysteine 450/cysteine 578. One can recognise a Peptidase S1 domain in the interval 463–703 (IIGGQPARPG…YVDWIKKEMG (241 aa)). Residues histidine 501 and aspartate 558 each act as charge relay system in the active site. N-linked (GlcNAc...) asparagine glycosylation is present at asparagine 582. Intrachain disulfides connect cysteine 621-cysteine 640 and cysteine 651-cysteine 681. The Charge relay system role is filled by serine 655.

The protein belongs to the peptidase S1 family. As to quaternary structure, core component of the complement C1 complex, a calcium-dependent complex composed of 1 molecule of the C1Q subcomplex, 2 molecules of C1R and 2 molecules of C1S. The C1Q subcomplex is composed 18 subunits: 3 chains of C1QA, C1QB, and C1QC trimerize to form 6 collagen-like triple helices connected to six globular ligand-recognition modules. Within the C1 complex, C1R is a dimer of identical chains, each of which is activated by cleavage into two chains, heavy and light, connected by disulfide bonds. In terms of processing, cleaved and activated by autocatalytic processing to generate Complement C1r subcomponent heavy and light chains that are connected by disulfide bonds. The iron and 2-oxoglutarate dependent 3-hydroxylation of aspartate and asparagine is (R) stereospecific within EGF domains.

It is found in the secreted. The protein localises to the cell surface. It catalyses the reaction Selective cleavage of Lys(or Arg)-|-Ile bond in complement subcomponent C1s to form the active form of C1s (EC 3.4.21.42).. Activated by the C1Q subcomplex of the C1 complex following C1Q binding to immunoglobulins (IgG or IgM) complexed with antigens to form antigen-antibody complexes on the surface of pathogens. Immunoglobulin-binding promotes autoactivation of C1R, which results in the cleavage of the Arg-Ile bond in the catalytic domain. In terms of biological role, serine protease component of the complement C1 complex, a multiprotein complex that initiates the classical pathway of the complement system, a cascade of proteins that leads to phagocytosis and breakdown of pathogens and signaling that strengthens the adaptive immune system. C1R catalyzes the first enzymatic step in the classical complement pathway: it is activated by the C1Q subcomplex of the C1 complex, which associates with IgG or IgM immunoglobulins complexed with antigens to form antigen-antibody complexes on the surface of pathogens. Immunoglobulin-binding promotes the autocatalytic cleavage and activation of C1R. Activated C1R then cleaves and activates C1S, the second protease of the classical complement pathway. It is unclear if C1R activates C1S within single, strained C1 complexes or between neighboring C1 complexes on surfaces. In Mus musculus (Mouse), this protein is Complement C1r-B subcomponent (C1rb).